A 227-amino-acid chain; its full sequence is Cytochrome c oxidase subunit 2 (227 aa).

At 1–14 (MAYPFQLGFQDATS) the chain is on the mitochondrial intermembrane side. A helical transmembrane segment spans residues 15–45 (PIMEELLHFHDHTLMIVFLISSLVLYIITLM). Over 46 to 59 (LTTKLTHTSTMDAQ) the chain is Mitochondrial matrix. Residues 60 to 87 (EVETVWTILPAIILILIALPSLRILYMM) form a helical membrane-spanning segment. At 88–227 (DEVNNPSLTV…IFEKWSASML (140 aa)) the chain is on the mitochondrial intermembrane side. Cu cation is bound by residues His-161, Cys-196, Glu-198, Cys-200, His-204, and Met-207. Glu-198 contributes to the Mg(2+) binding site.

It belongs to the cytochrome c oxidase subunit 2 family. Component of the cytochrome c oxidase (complex IV, CIV), a multisubunit enzyme composed of 14 subunits. The complex is composed of a catalytic core of 3 subunits MT-CO1, MT-CO2 and MT-CO3, encoded in the mitochondrial DNA, and 11 supernumerary subunits COX4I, COX5A, COX5B, COX6A, COX6B, COX6C, COX7A, COX7B, COX7C, COX8 and NDUFA4, which are encoded in the nuclear genome. The complex exists as a monomer or a dimer and forms supercomplexes (SCs) in the inner mitochondrial membrane with NADH-ubiquinone oxidoreductase (complex I, CI) and ubiquinol-cytochrome c oxidoreductase (cytochrome b-c1 complex, complex III, CIII), resulting in different assemblies (supercomplex SCI(1)III(2)IV(1) and megacomplex MCI(2)III(2)IV(2)). Found in a complex with TMEM177, COA6, COX18, COX20, SCO1 and SCO2. Interacts with TMEM177 in a COX20-dependent manner. Interacts with COX20. Interacts with COX16. Requires Cu cation as cofactor.

It localises to the mitochondrion inner membrane. It carries out the reaction 4 Fe(II)-[cytochrome c] + O2 + 8 H(+)(in) = 4 Fe(III)-[cytochrome c] + 2 H2O + 4 H(+)(out). Component of the cytochrome c oxidase, the last enzyme in the mitochondrial electron transport chain which drives oxidative phosphorylation. The respiratory chain contains 3 multisubunit complexes succinate dehydrogenase (complex II, CII), ubiquinol-cytochrome c oxidoreductase (cytochrome b-c1 complex, complex III, CIII) and cytochrome c oxidase (complex IV, CIV), that cooperate to transfer electrons derived from NADH and succinate to molecular oxygen, creating an electrochemical gradient over the inner membrane that drives transmembrane transport and the ATP synthase. Cytochrome c oxidase is the component of the respiratory chain that catalyzes the reduction of oxygen to water. Electrons originating from reduced cytochrome c in the intermembrane space (IMS) are transferred via the dinuclear copper A center (CU(A)) of subunit 2 and heme A of subunit 1 to the active site in subunit 1, a binuclear center (BNC) formed by heme A3 and copper B (CU(B)). The BNC reduces molecular oxygen to 2 water molecules using 4 electrons from cytochrome c in the IMS and 4 protons from the mitochondrial matrix. This Balaenoptera borealis (Sei whale) protein is Cytochrome c oxidase subunit 2 (MT-CO2).